The primary structure comprises 353 residues: Photosystem II protein D1 (353 aa).

Position 2 is an N-acetylthreonine (Thr2). At Thr2 the chain carries Phosphothreonine. 3 helical membrane passes run 29–46 (YIGW…TATS), 118–133 (HFLL…EWEL), and 142–156 (WIAV…AATA). His118 is a chlorophyll a binding site. Pheophytin a is bound at residue Tyr126. [CaMn4O5] cluster-binding residues include Asp170 and Glu189. A helical membrane pass occupies residues 197–218 (FHMLGVAGVFGGSLFSAMHGSL). Residue His198 participates in chlorophyll a binding. A quinone contacts are provided by residues His215 and 264–265 (SF). His215 lines the Fe cation pocket. A Fe cation-binding site is contributed by His272. A helical membrane pass occupies residues 274–288 (FLAAWPVVGIWFTAL). [CaMn4O5] cluster is bound by residues His332, Glu333, Asp342, and Ala344. Positions 345 to 353 (AVEAPSING) are excised as a propeptide.

This sequence belongs to the reaction center PufL/M/PsbA/D family. PSII is composed of 1 copy each of membrane proteins PsbA, PsbB, PsbC, PsbD, PsbE, PsbF, PsbH, PsbI, PsbJ, PsbK, PsbL, PsbM, PsbT, PsbX, PsbY, PsbZ, Psb30/Ycf12, at least 3 peripheral proteins of the oxygen-evolving complex and a large number of cofactors. It forms dimeric complexes. The D1/D2 heterodimer binds P680, chlorophylls that are the primary electron donor of PSII, and subsequent electron acceptors. It shares a non-heme iron and each subunit binds pheophytin, quinone, additional chlorophylls, carotenoids and lipids. D1 provides most of the ligands for the Mn4-Ca-O5 cluster of the oxygen-evolving complex (OEC). There is also a Cl(-1) ion associated with D1 and D2, which is required for oxygen evolution. The PSII complex binds additional chlorophylls, carotenoids and specific lipids. is required as a cofactor. In terms of processing, tyr-161 forms a radical intermediate that is referred to as redox-active TyrZ, YZ or Y-Z. C-terminally processed by CTPA; processing is essential to allow assembly of the oxygen-evolving complex and thus photosynthetic growth.

Its subcellular location is the plastid. The protein resides in the chloroplast thylakoid membrane. It catalyses the reaction 2 a plastoquinone + 4 hnu + 2 H2O = 2 a plastoquinol + O2. Its function is as follows. This is one of the two reaction center proteins of photosystem II. Photosystem II (PSII) is a light-driven water:plastoquinone oxidoreductase that uses light energy to abstract electrons from H(2)O, generating O(2) and a proton gradient subsequently used for ATP formation. It consists of a core antenna complex that captures photons, and an electron transfer chain that converts photonic excitation into a charge separation. The D1/D2 (PsbA/PsbD) reaction center heterodimer binds P680, the primary electron donor of PSII as well as several subsequent electron acceptors. This chain is Photosystem II protein D1, found in Pisum sativum (Garden pea).